Reading from the N-terminus, the 290-residue chain is Hsp70 nucleotide exchange factor FES1 (290 aa).

Serine 12 is modified (phosphoserine). ARM repeat units follow at residues 13 to 57, 76 to 116, 120 to 161, 164 to 205, 211 to 251, and 253 to 290; these read QGDK…NPEV, LDNA…TAVQ, DSQN…NLIR, KDIS…AYLS, ENII…HLIS, and GIKF…KYVL.

Belongs to the FES1 family. In terms of assembly, interacts with the Hsp70 chaperones SSA1 and SSB1.

It is found in the cytoplasm. Its function is as follows. Involved in protein translation, propagation of [PSI+] prions, and polyamine tolerance. Functions as a nucleotide exchange factor (NEF), which accelerates the release of ADP, for the cytosolic Hsp70 chaperone SSA1 and the ribosome-associated Hsp70 chaperone SSB1. Required for fully efficient Hsp70-mediated folding of proteins. The protein is Hsp70 nucleotide exchange factor FES1 (FES1) of Saccharomyces cerevisiae (strain ATCC 204508 / S288c) (Baker's yeast).